The chain runs to 408 residues: UPF0761 membrane protein NMCC_0461 (408 aa).

6 helical membrane passes run 43–63, 100–120, 139–159, 176–196, 210–230, and 248–268; these read LLALVPVLTVMVAVASIFPVF, LTAIGSVMLVVTSLMLIRTID, FLVYWALLTFGPLSLGVGISF, WSGALRTAATLTFMTLLLWGL, AFVGALATAFCLETARSLFTW, and VPFFLLWLNLLWTLVLGGAVL.

The protein belongs to the UPF0761 family.

It is found in the cell inner membrane. In Neisseria meningitidis serogroup C (strain 053442), this protein is UPF0761 membrane protein NMCC_0461.